The following is a 461-amino-acid chain: Carboxypeptidase Rv3627c (461 aa).

The signal sequence occupies residues 1–28 (MGPTRWRKSTHVVVGAAVLAFVAVVVAA). S114 acts as the Acyl-ester intermediate in catalysis. The Proton acceptor role is filled by K117. Residue S295 is part of the active site.

It belongs to the peptidase S13 family.

Carboxypeptidase that cleaves terminal D-alanine from peptidoglycan in the mycobacterial cell wall. May cleave L-Lys-D-Ala and/or D-Ala-D-Ala peptide bonds. Exerts important effects on mycobacterial cell morphology and cell division. In Mycobacterium tuberculosis (strain ATCC 25618 / H37Rv), this protein is Carboxypeptidase Rv3627c.